Here is a 226-residue protein sequence, read N- to C-terminus: Phosphoribosylformylglycinamidine synthase subunit PurQ (226 aa).

Positions 3–226 constitute a Glutamine amidotransferase type-1 domain; that stretch reads RVAVIRFPGT…FESLVEWCRS (224 aa). The active-site Nucleophile is Cys86. Catalysis depends on residues His199 and Glu201.

As to quaternary structure, part of the FGAM synthase complex composed of 1 PurL, 1 PurQ and 2 PurS subunits.

Its subcellular location is the cytoplasm. It catalyses the reaction N(2)-formyl-N(1)-(5-phospho-beta-D-ribosyl)glycinamide + L-glutamine + ATP + H2O = 2-formamido-N(1)-(5-O-phospho-beta-D-ribosyl)acetamidine + L-glutamate + ADP + phosphate + H(+). The catalysed reaction is L-glutamine + H2O = L-glutamate + NH4(+). It functions in the pathway purine metabolism; IMP biosynthesis via de novo pathway; 5-amino-1-(5-phospho-D-ribosyl)imidazole from N(2)-formyl-N(1)-(5-phospho-D-ribosyl)glycinamide: step 1/2. Functionally, part of the phosphoribosylformylglycinamidine synthase complex involved in the purines biosynthetic pathway. Catalyzes the ATP-dependent conversion of formylglycinamide ribonucleotide (FGAR) and glutamine to yield formylglycinamidine ribonucleotide (FGAM) and glutamate. The FGAM synthase complex is composed of three subunits. PurQ produces an ammonia molecule by converting glutamine to glutamate. PurL transfers the ammonia molecule to FGAR to form FGAM in an ATP-dependent manner. PurS interacts with PurQ and PurL and is thought to assist in the transfer of the ammonia molecule from PurQ to PurL. The chain is Phosphoribosylformylglycinamidine synthase subunit PurQ from Methanopyrus kandleri (strain AV19 / DSM 6324 / JCM 9639 / NBRC 100938).